A 732-amino-acid chain; its full sequence is Glycine--tRNA ligase (732 aa).

Residues 1 to 27 (MRHVLSLVYKCSVFSKQVTVFSNHLRL) constitute a mitochondrion transit peptide. The 57-residue stretch at 61-117 (ILAPLRANVKEQGDLVRKLKEEKAPEIDIKKAVAELKTRKKILEDKELSLAPAEDLF) folds into the WHEP-TRS domain. Glu-297 serves as a coordination point for glycine. Residues 329–331 (RNE) and 340–341 (RV) contribute to the ATP site. Glu-348 serves as a coordination point for glycine. Position 453–454 (453–454 (EC)) interacts with ATP. 572 to 574 (EPS) lines the glycine pocket. Arg-579 serves as a coordination point for ATP.

It belongs to the class-II aminoacyl-tRNA synthetase family. As to quaternary structure, homodimer.

Its subcellular location is the mitochondrion. It is found in the cytoplasm. The protein localises to the cell projection. The protein resides in the axon. It catalyses the reaction tRNA(Gly) + glycine + ATP = glycyl-tRNA(Gly) + AMP + diphosphate. The catalysed reaction is 2 ATP + H(+) = P(1),P(4)-bis(5'-adenosyl) tetraphosphate + diphosphate. In terms of biological role, catalyzes the ATP-dependent ligation of glycine to the 3'-end of its cognate tRNA, via the formation of an aminoacyl-adenylate intermediate (Gly-AMP). Also produces diadenosine tetraphosphate (Ap4A), a universal pleiotropic signaling molecule needed for cell regulation pathways, by direct condensation of 2 ATPs. Thereby, may play a special role in Ap4A homeostasis. Required for terminal arborization of both dendrites and axons during development. The protein is Glycine--tRNA ligase of Bombyx mori (Silk moth).